The following is a 464-amino-acid chain: Spore coat protein SP65 (464 aa).

A signal peptide spans 1-17 (MKVLLLLVCLVFAYVNA). Residues 21–43 (ACYNVVCPSNYQCRAEGDQAYCV) form the Follistatin-like 1 domain. N-linked (GlcNAc...) asparagine glycosylation is present at N111. Follistatin-like domains are found at residues 121–143 (VCRD…PHCV) and 151–173 (LCRV…PTCL). Residue N247 is glycosylated (N-linked (GlcNAc...) asparagine). The segment at 250–320 (STTGATTGAT…STTGAATTAP (71 aa)) is disordered.

In terms of assembly, binds to the C-terminal region of pspB.

The protein localises to the spore wall. Its function is as follows. Forms a triad with cellulose and pspB that is essential for spore outer layer formation. The chain is Spore coat protein SP65 (cotE) from Dictyostelium discoideum (Social amoeba).